We begin with the raw amino-acid sequence, 327 residues long: MSASAAVSSTCAAASSTTSRRSSSSPASRVQATPRRSLPSRLVASRTSPRSPVVPPVYATASPGGAGGTTAAAARKKLLIFDAEEYLAESLAKYTARLSGEAVAERGAFTVALSGGSLIKALRKLTESPYLEAVEWSKWHVFWVDERVVPKDHADSNYKLAMDGLLSKVPIPASQIYAINDTLSAEGAADEYETCLKQLVNDGVVAISEVTGFPKLDLMLLGMGPDGHVASLFPGHPVVNENLKWVSYIKDSPKPPPERITFTFPLVNSSAHIALVVTGAGKAGAVHKAFSDKQSSSDLLPVEMVSQQEGVLTWFTDKPAVSMLSSI.

Composition is skewed to low complexity over residues 1-29 and 43-66; these read MSASAAVSSTCAAASSTTSRRSSSSPASR and VASRTSPRSPVVPPVYATASPGGA. The tract at residues 1-66 is disordered; it reads MSASAAVSST…VYATASPGGA (66 aa). The N-terminal 71 residues, 1–71, are a transit peptide targeting the chloroplast; sequence MSASAAVSST…SPGGAGGTTA (71 aa).

Belongs to the glucosamine/galactosamine-6-phosphate isomerase family. 6-phosphogluconolactonase subfamily.

The protein resides in the plastid. It is found in the chloroplast. The enzyme catalyses 6-phospho-D-glucono-1,5-lactone + H2O = 6-phospho-D-gluconate + H(+). Its pathway is carbohydrate degradation; pentose phosphate pathway; D-ribulose 5-phosphate from D-glucose 6-phosphate (oxidative stage): step 2/3. Functionally, hydrolysis of 6-phosphogluconolactone to 6-phosphogluconate. The chain is Probable 6-phosphogluconolactonase 3, chloroplastic from Oryza sativa subsp. indica (Rice).